A 140-amino-acid chain; its full sequence is ATP synthase epsilon chain (140 aa).

The protein belongs to the ATPase epsilon chain family. In terms of assembly, F-type ATPases have 2 components, CF(1) - the catalytic core - and CF(0) - the membrane proton channel. CF(1) has five subunits: alpha(3), beta(3), gamma(1), delta(1), epsilon(1). CF(0) has three main subunits: a, b and c.

The protein resides in the cell inner membrane. Functionally, produces ATP from ADP in the presence of a proton gradient across the membrane. The chain is ATP synthase epsilon chain from Chromobacterium violaceum (strain ATCC 12472 / DSM 30191 / JCM 1249 / CCUG 213 / NBRC 12614 / NCIMB 9131 / NCTC 9757 / MK).